The sequence spans 157 residues: Putative 4-hydroxy-4-methyl-2-oxoglutarate aldolase (157 aa).

Substrate-binding positions include G78–I81 and R100. D101 is an a divalent metal cation binding site.

This sequence belongs to the class II aldolase/RraA-like family. In terms of assembly, homotrimer. A divalent metal cation serves as cofactor.

It catalyses the reaction 4-hydroxy-4-methyl-2-oxoglutarate = 2 pyruvate. It carries out the reaction oxaloacetate + H(+) = pyruvate + CO2. Functionally, catalyzes the aldol cleavage of 4-hydroxy-4-methyl-2-oxoglutarate (HMG) into 2 molecules of pyruvate. Also contains a secondary oxaloacetate (OAA) decarboxylase activity due to the common pyruvate enolate transition state formed following C-C bond cleavage in the retro-aldol and decarboxylation reactions. This chain is Putative 4-hydroxy-4-methyl-2-oxoglutarate aldolase, found in Mycobacterium leprae (strain Br4923).